Reading from the N-terminus, the 427-residue chain is MKGTIFAVALNHRSQLDAWQEAFQQSPIKAPPKTAVWFIKPRNTVIGCGEPIPFPQGENLLSGATVALIVGKTATKVREEDAAEYIAGYALANDVSLPEESFYRPAIKAKCRDGFCPIGETVALSNVDNLTIYTEINGRPADHWNTSDLQRNAAQLLSALSEFATLNPGDAILLGTPQARVEIQPGDRVRVLAEGFPPLENPVVDEREVTTRKSFPTLPHPHGTLFALGLNYADHASELEFKPPEEPLVFLKAPNTLTGDNQTSVRPNNIEYMHYEAELVVVIGKQARNVSEADAMDYVAGYTVCNDYAIRDYLENYYRPNLRVKSRDGLTPMLSTIVPKEAIPDPHNLTLRTFVNGELRQQGTTADLIFSVPFLIAYLSEFMTLNPGDMIATGTPKGLSDVGDEVVVEVEGVGRLVNRIVSEETAK.

Approximate repeat units follow at residues 1–202 and 203–405; these read MKGT…LENP and VVDE…VGDE. E276, E278, and D307 together coordinate a divalent metal cation.

The protein belongs to the FAH family. Monomer. The cofactor is Mg(2+).

It catalyses the reaction (2E,4Z)-5-hydroxypenta-2,4-diene-1,2,5-tricarboxylate = (3E,5R)-5-carboxy-2-oxohept-3-enedioate. The enzyme catalyses (3E,5R)-5-carboxy-2-oxohept-3-enedioate + H(+) = (4Z)-2-oxohept-4-enedioate + CO2. It functions in the pathway aromatic compound metabolism; 4-hydroxyphenylacetate degradation; pyruvate and succinate semialdehyde from 4-hydroxyphenylacetate: step 4/7. The protein operates within aromatic compound metabolism; 4-hydroxyphenylacetate degradation; pyruvate and succinate semialdehyde from 4-hydroxyphenylacetate: step 5/7. Decarboxylates OPET (5-oxo-pent-3-ene-1,2,5-tricarboxylic acid) into HHDD (2-hydroxy-hept-2,4-diene-1,7-dioate) and isomerizes it to OHED (2-oxo-hept-3-ene-1,7-dioate). The sequence is that of Homoprotocatechuate catabolism bifunctional isomerase/decarboxylase (hpcE) from Escherichia coli.